We begin with the raw amino-acid sequence, 475 residues long: Probable proline--tRNA ligase, mitochondrial (475 aa).

Residues 1-29 (MEGLLTRCRTLSALAACSLRHCRYIIHKC) constitute a mitochondrion transit peptide.

It belongs to the class-II aminoacyl-tRNA synthetase family.

The protein localises to the mitochondrion matrix. The enzyme catalyses tRNA(Pro) + L-proline + ATP = L-prolyl-tRNA(Pro) + AMP + diphosphate. Its function is as follows. Mitochondrial aminoacyl-tRNA synthetase that catalyzes the specific attachment of the proline amino acid (aa) to the homologous transfer RNA (tRNA), further participating in protein synthesis. The reaction occurs in a two steps: proline is first activated by ATP to form Pro-AMP and then transferred to the acceptor end of tRNA(Pro). The polypeptide is Probable proline--tRNA ligase, mitochondrial (Pars2) (Mus musculus (Mouse)).